The following is a 278-amino-acid chain: Lectin 6 (278 aa).

An N-terminal signal peptide occupies residues 1-23; the sequence is MTLSSALIKIFITFLFLQNHVNS. N-linked (GlcNAc...) asparagine glycans are attached at residues Asn-116, Asn-139, and Asn-271.

Belongs to the leguminous lectin family.

In terms of biological role, may be involved in arbuscular mycorrhizal (AM) symbiosis with AM fungi. This chain is Lectin 6, found in Medicago truncatula (Barrel medic).